The primary structure comprises 459 residues: Exodeoxyribonuclease 7 large subunit (459 aa).

The protein belongs to the XseA family. Heterooligomer composed of large and small subunits.

The protein localises to the cytoplasm. The catalysed reaction is Exonucleolytic cleavage in either 5'- to 3'- or 3'- to 5'-direction to yield nucleoside 5'-phosphates.. In terms of biological role, bidirectionally degrades single-stranded DNA into large acid-insoluble oligonucleotides, which are then degraded further into small acid-soluble oligonucleotides. This Pseudomonas putida (strain ATCC 47054 / DSM 6125 / CFBP 8728 / NCIMB 11950 / KT2440) protein is Exodeoxyribonuclease 7 large subunit.